The chain runs to 167 residues: 3-dehydroquinate dehydratase (167 aa).

Tyr-22 acts as the Proton acceptor in catalysis. Positions 76, 82, and 89 each coordinate substrate. The active-site Proton donor is the His-102. Substrate-binding positions include 103-104 (LT) and Arg-113.

Belongs to the type-II 3-dehydroquinase family. Homododecamer.

It carries out the reaction 3-dehydroquinate = 3-dehydroshikimate + H2O. The protein operates within metabolic intermediate biosynthesis; chorismate biosynthesis; chorismate from D-erythrose 4-phosphate and phosphoenolpyruvate: step 3/7. Its function is as follows. Catalyzes a trans-dehydration via an enolate intermediate. This is 3-dehydroquinate dehydratase from Helicobacter pylori (strain Shi470).